Consider the following 82-residue polypeptide: Neuropeptide-like peptide 36 (82 aa).

The sequence is that of Neuropeptide-like peptide 36 (nlp-36) from Caenorhabditis elegans.